Here is a 612-residue protein sequence, read N- to C-terminus: uncharacterized protein (612 aa).

Disordered stretches follow at residues 46-113 (QQPQ…MVTP), 129-185 (QQYQ…TPTY), 313-360 (TKDG…GSTM), 457-488 (FSIS…SGYG), and 593-612 (NNTN…VVTI). Low complexity predominate over residues 58 to 102 (HQQIPISTQSTPNSTSSTTTTTTTTTSTTTAPTSNSKKSKTTPSN). Polar residues-rich tracts occupy residues 103-113 (GNKPTSGMVTP) and 129-138 (QQYQPNSQLQ). Low complexity predominate over residues 143–169 (IIKKSSLSTTPNNINNNNNNNNNTNTI). The segment covering 175-185 (GGNNSAPTPTY) has biased composition (polar residues). Low complexity predominate over residues 323-359 (TTSSTSTSSSATSTTSSSTSSTTTTSSTSNSSTPGST).

This is an uncharacterized protein from Dictyostelium discoideum (Social amoeba).